The chain runs to 514 residues: Pantetheinase (514 aa).

An N-terminal signal peptide occupies residues 1–22 (MITSRLLVYVAVLVLCVIKVSS). An N-linked (GlcNAc...) asparagine glycan is attached at asparagine 39. The CN hydrolase domain maps to 40 to 307 (ATLVPVSHEE…GKLLLSQLDS (268 aa)). Glutamate 80 (proton acceptor) is an active-site residue. Asparagine 87 and asparagine 147 each carry an N-linked (GlcNAc...) asparagine glycan. The active-site Proton donor is the lysine 179. Residue cysteine 212 is the Nucleophile of the active site. Residues asparagine 316 and asparagine 354 are each glycosylated (N-linked (GlcNAc...) asparagine). Aspartate 492 is lipidated: GPI-anchor amidated aspartate. Positions 493–514 (PRSQVPGVMLLVIIPIVCSLSW) are cleaved as a propeptide — removed in mature form.

This sequence belongs to the carbon-nitrogen hydrolase superfamily. BTD/VNN family. In terms of assembly, monomer.

The protein localises to the cell membrane. The catalysed reaction is (R)-pantetheine + H2O = cysteamine + (R)-pantothenate. Amidohydrolase that hydrolyzes specifically one of the carboamide linkages in D-pantetheine thus recycling pantothenic acid (vitamin B5) and releasing cysteamine. This is Pantetheinase (VNN1) from Canis lupus familiaris (Dog).